The following is a 119-amino-acid chain: Mitochondrial coiled-coil domain protein 1 (119 aa).

Residues 1-24 constitute a mitochondrion transit peptide; sequence MVLPLPWLSRYHFLRLLLPSWSLA. The tract at residues 25–65 is disordered; that stretch reads PQGSHGCCSQNPKASMEEQTSSRGNGKMTSPPRGPGTHRTA. The span at 31–52 shows a compositional bias: polar residues; that stretch reads CCSQNPKASMEEQTSSRGNGKM. Positions 62-116 form a coiled coil; the sequence is HRTAELARAEELLEQQLELYQALLEGQEGAWEAQALVLKIQKLKEQMRRHQESLG.

In terms of tissue distribution, widely expressed. Expressed in adult and fetal liver, kidney and lung. Expressed in fetal brain. Weakly expressed in fetal spleen.

The protein resides in the mitochondrion. This chain is Mitochondrial coiled-coil domain protein 1 (MCCD1), found in Homo sapiens (Human).